We begin with the raw amino-acid sequence, 863 residues long: Leucine--tRNA ligase (863 aa).

Positions 42-52 (PYPSGKLHMGH) match the 'HIGH' region motif. The short motif at 623 to 627 (KMSKS) is the 'KMSKS' region element. K626 contributes to the ATP binding site.

This sequence belongs to the class-I aminoacyl-tRNA synthetase family.

The protein localises to the cytoplasm. It carries out the reaction tRNA(Leu) + L-leucine + ATP = L-leucyl-tRNA(Leu) + AMP + diphosphate. The chain is Leucine--tRNA ligase from Paraburkholderia xenovorans (strain LB400).